The primary structure comprises 1083 residues: Error-prone DNA polymerase (1083 aa).

This sequence belongs to the DNA polymerase type-C family. DnaE2 subfamily.

It is found in the cytoplasm. The enzyme catalyses DNA(n) + a 2'-deoxyribonucleoside 5'-triphosphate = DNA(n+1) + diphosphate. Its function is as follows. DNA polymerase involved in damage-induced mutagenesis and translesion synthesis (TLS). It is not the major replicative DNA polymerase. The chain is Error-prone DNA polymerase from Xanthomonas axonopodis pv. citri (strain 306).